The primary structure comprises 460 residues: Argininosuccinate lyase (460 aa).

It belongs to the lyase 1 family. Argininosuccinate lyase subfamily.

Its subcellular location is the cytoplasm. It catalyses the reaction 2-(N(omega)-L-arginino)succinate = fumarate + L-arginine. The protein operates within amino-acid biosynthesis; L-arginine biosynthesis; L-arginine from L-ornithine and carbamoyl phosphate: step 3/3. This Limosilactobacillus fermentum (strain NBRC 3956 / LMG 18251) (Lactobacillus fermentum) protein is Argininosuccinate lyase.